The following is a 319-amino-acid chain: GTP 3',8-cyclase (319 aa).

A Radical SAM core domain is found at 4–227; it reads KHGRKINYLR…VETDKSSTAL (224 aa). Residue arginine 13 participates in GTP binding. [4Fe-4S] cluster is bound by residues cysteine 20 and cysteine 24. Tyrosine 26 contributes to the S-adenosyl-L-methionine binding site. [4Fe-4S] cluster is bound at residue cysteine 27. Arginine 63 serves as a coordination point for GTP. Glycine 67 lines the S-adenosyl-L-methionine pocket. Threonine 94 contributes to the GTP binding site. Serine 118 contributes to the S-adenosyl-L-methionine binding site. Residue lysine 155 participates in GTP binding. Methionine 189 contacts S-adenosyl-L-methionine. [4Fe-4S] cluster is bound by residues cysteine 249 and cysteine 252. 254-256 contacts GTP; that stretch reads RVR. Cysteine 266 lines the [4Fe-4S] cluster pocket.

The protein belongs to the radical SAM superfamily. MoaA family. Monomer and homodimer. [4Fe-4S] cluster is required as a cofactor.

It carries out the reaction GTP + AH2 + S-adenosyl-L-methionine = (8S)-3',8-cyclo-7,8-dihydroguanosine 5'-triphosphate + 5'-deoxyadenosine + L-methionine + A + H(+). The protein operates within cofactor biosynthesis; molybdopterin biosynthesis. In terms of biological role, catalyzes the cyclization of GTP to (8S)-3',8-cyclo-7,8-dihydroguanosine 5'-triphosphate. This is GTP 3',8-cyclase from Clostridium botulinum (strain Langeland / NCTC 10281 / Type F).